A 467-amino-acid chain; its full sequence is Heat shock factor protein 3 (467 aa).

Residues 16-121 (VPGFLAKLWA…LLENIKRKVS (106 aa)) mediate DNA binding. The interval 128 to 201 (LKVCAEDLHK…LSLMRGNYIV (74 aa)) is hydrophobic repeat HR-A/B. Residues 364–389 (IQDFLNCIDASLEELQAMLSGKQYSF) form a hydrophobic repeat HR-C region. Residues 427 to 449 (EDLGASERETAGSKGGQEGTESC) form a disordered region.

It belongs to the HSF family. As to quaternary structure, homotrimer. Expressed in most tissues. High levels are found in erythrocytes and low levels in liver.

It localises to the cytoplasm. Its subcellular location is the nucleus. Functionally, DNA-binding protein that specifically binds heat shock promoter elements (HSE) and activates transcription. HSF3 binds DNA constitutively only when the C-terminal region is deleted. This Gallus gallus (Chicken) protein is Heat shock factor protein 3 (HSF3).